The chain runs to 946 residues: MVEGRVSEFLKKLGFSGGGRQYQALEKDEEEALIDEQSELKAIEKEKKVTALPPKEACKCQKEDLARAFCVDLHTGLSEFSVTQRRLAHGWNEFVADNSEPVWKKYLDQFKNPLILLLLGSALVSVLTKEYEDAVSIATAVLVVVTVAFIQEYRSEKSLEELTKLVPPECNCLREGKLQHLLARELVPGDVVSLSIGDRIPADIRLTEVTDLLVDESSFTGEAEPCSKTDSPLTGGGDLTTLSNIVFMGTLVQYGRGQGVVIGTGESSQFGEVFKMMQAEETPKTPLQKSMDRLGKQLTLFSFGIIGLIMLIGWSQGKQLLSMFTIGVSLAVAAIPEGLPIVVMVTLVLGVLRMAKKRVIVKKLPIVETLGCCSVLCSDKTGTLTANEMTVTQLVTSDGLRAEVSGVGYDGQGTVCLLPSKEVIKEFSNVSVGKLVEAGCVANNAVIRKNAVMGQPTEGALMALAMKMDLSDIKNSYIRKKEIPFSSEQKWMAVKCSLKTEDQEDIYFMKGALEEVIRYCTMYNNGGIPLPLTPQQRSFCLQEEKRMGSLGLRVLALASGPELGRLTFLGLVGIIDPPRVGVKEAVQVLSESGVSVKMITGDALETALAIGRNIGLCNGKLQAMSGEEVDSVEKGELADRVGKVSVFFRTSPKHKLKIIKALQESGAIVAMTGDGVNDAVALKSADIGIAMGQTGTDVSKEAANMILVDDDFSAIMNAVEEGKGIFYNIKNFVRFQLSTSISALSLITLSTVFNLPSPLNAMQILWINIIMDGPPAQSLGVEPVDKDAFRQPPRSVRDTILSRALILKILMSAAIIISGTLFIFWKEMPEDRASTPRTTTMTFTCFVFFDLFNALTCRSQTKLIFEIGFLRNHMFLYSVLGSILGQLAVIYIPPLQRVFQTENLGALDLLFLTGLASSVFILSELLKLCEKYCCSPKRVQMHPEDV.

Topologically, residues 1 to 106 (MVEGRVSEFL…DNSEPVWKKY (106 aa)) are cytoplasmic. Residues 71–95 (VDLHTGLSEFSVTQRRLAHGWNEFV) form an interaction with ORAI1 region. A helical membrane pass occupies residues 107 to 127 (LDQFKNPLILLLLGSALVSVL). Residues 128–129 (TK) lie on the Extracellular side of the membrane. Residues 130 to 150 (EYEDAVSIATAVLVVVTVAFI) traverse the membrane as a helical segment. The Cytoplasmic segment spans residues 151–231 (QEYRSEKSLE…EAEPCSKTDS (81 aa)). Residues 232 to 252 (PLTGGGDLTTLSNIVFMGTLV) traverse the membrane as a helical segment. Over 253–293 (QYGRGQGVVIGTGESSQFGEVFKMMQAEETPKTPLQKSMDR) the chain is Extracellular. Threonine 264 carries the phosphothreonine modification. Phosphoserine occurs at positions 267 and 268. A helical transmembrane segment spans residues 294–314 (LGKQLTLFSFGIIGLIMLIGW). At 315–331 (SQGKQLLSMFTIGVSLA) the chain is on the cytoplasmic side. 4 residues coordinate Ca(2+): valine 332, alanine 333, isoleucine 335, and glutamate 337. Residues 332-352 (VAAIPEGLPIVVMVTLVLGVL) form a helical membrane-spanning segment. Residues 353 to 750 (RMAKKRVIVK…ISALSLITLS (398 aa)) lie on the Extracellular side of the membrane. The active-site 4-aspartylphosphate intermediate is aspartate 379. 2 residues coordinate Mg(2+): aspartate 674 and aspartate 678. The chain crosses the membrane as a helical span at residues 751–771 (TVFNLPSPLNAMQILWINIIM). Asparagine 768 and aspartate 772 together coordinate Ca(2+). Over 772 to 804 (DGPPAQSLGVEPVDKDAFRQPPRSVRDTILSRA) the chain is Cytoplasmic. A helical membrane pass occupies residues 805–825 (LILKILMSAAIIISGTLFIFW). Residues 826–837 (KEMPEDRASTPR) lie on the Extracellular side of the membrane. The chain crosses the membrane as a helical span at residues 838 to 855 (TTTMTFTCFVFFDLFNAL). At 856 to 874 (TCRSQTKLIFEIGFLRNHM) the chain is on the cytoplasmic side. The helical transmembrane segment at 875–895 (FLYSVLGSILGQLAVIYIPPL) threads the bilayer. Topologically, residues 896–905 (QRVFQTENLG) are extracellular. Residues 906–926 (ALDLLFLTGLASSVFILSELL) traverse the membrane as a helical segment. Residues 927–946 (KLCEKYCCSPKRVQMHPEDV) are Cytoplasmic-facing.

Belongs to the cation transport ATPase (P-type) (TC 3.A.3) family. Type IIA subfamily. In terms of assembly, interacts (via N-terminus) with ORAI1 (via N- and C-termini); this interaction regulates Ca(2+) influx at the plasma membrane. In terms of tissue distribution, highly expressed in the gastrointestinal and respiratory tracts, prostate, thyroid, salivary, and mammary glands. Expressed in colon epithelial cells (at protein level). Expressed in brain and testis (at protein level).

It localises to the golgi apparatus. Its subcellular location is the trans-Golgi network membrane. The protein resides in the cell membrane. It is found in the basolateral cell membrane. It catalyses the reaction Ca(2+)(in) + ATP + H2O = Ca(2+)(out) + ADP + phosphate + H(+). The enzyme catalyses Mn(2+)(in) + ATP + H2O = Mn(2+)(out) + ADP + phosphate + H(+). Its function is as follows. ATP-driven pump that supplies the Golgi apparatus with Ca(2+) and Mn(2+) ions, both essential cofactors for processing and trafficking of newly synthesized proteins in the secretory pathway. Within a catalytic cycle, acquires Ca(2+) or Mn(2+) ions on the cytoplasmic side of the membrane and delivers them to the lumenal side. The transfer of ions across the membrane is coupled to ATP hydrolysis and is associated with a transient phosphorylation that shifts the pump conformation from inward-facing to outward-facing state. Induces Ca(2+) influx independently of its ATP-driven pump function. At the basolateral membrane of mammary epithelial cells, interacts with Ca(2+) channel ORAI1 and mediates Ca(2+) entry independently of the Ca(2+) content of endoplasmic reticulum or Golgi stores. May facilitate transepithelial transport of large quantities of Ca(2+) for milk secretion via activation of Ca(2+) influx channels at the plasma membrane and active Ca(2+) transport at the Golgi apparatus. In Homo sapiens (Human), this protein is Calcium-transporting ATPase type 2C member 2.